The following is a 300-amino-acid chain: MSKKALLILHGKQADNQSVRNAVIDWRNQGHELAVRVTWEGGDAERYVREALDNGFKTIIAGGGDGSVRDITQALMENGNSELELAIIPLGTANDFATAAEVSEEPADALSLLNRPAQPCDVIRVNNHYFLNMATGGFGTEVTTQTSEELKKMLGGAAYLLTGLTRFSEIESAKGHFKGEDFEWEGDFLALGLGNGRQAGGGQRLCPDALVNDGLFDVAILPADMDLLAGVKELFDSEARQDPDQEGLFVRTRLSEMKIETPTPMNLNLDGEPIQNTTFQIQAIRNALRLYLPEGCPLLG.

The 129-residue stretch at 1–129 (MSKKALLILH…CDVIRVNNHY (129 aa)) folds into the DAGKc domain. Residues Thr38, 64–70 (GDGSVRD), and Thr92 contribute to the ATP site. Mg(2+) contacts are provided by Leu210, Asp213, and Leu215. The active-site Proton acceptor is the Glu272.

It belongs to the diacylglycerol/lipid kinase family. YegS lipid kinase subfamily. The cofactor is Mg(2+). Ca(2+) serves as cofactor.

The protein localises to the cytoplasm. In terms of biological role, probably phosphorylates lipids; the in vivo substrate is unknown. The sequence is that of Probable lipid kinase YegS-like from Alcanivorax borkumensis (strain ATCC 700651 / DSM 11573 / NCIMB 13689 / SK2).